Consider the following 294-residue polypeptide: Homeobox-leucine zipper protein ATHB-13 (294 aa).

Positions 82-141 (MGEKKRRLNMEQVKTLEKNFELGNKLEPERKMQLARALGLQPRQIAIWFQNRRARWKTKQ) form a DNA-binding region, homeobox. Positions 142–177 (LEKDYDTLKRQFDTLKAENDLLQTHNQKLQAEIMGL) are leucine-zipper. The disordered stretch occupies residues 181-246 (EQTESINLNK…FFPPSPATAT (66 aa)). Residues 197–210 (SNRSDNSSDNLRLD) are compositionally biased toward low complexity. Positions 214–223 (APPSNDSTLT) are enriched in polar residues.

It belongs to the HD-ZIP homeobox family. Class I subfamily. As to expression, predominantly expressed in leaves and flowers.

It localises to the nucleus. In terms of biological role, probable transcription factor that may act in the sucrose-signaling pathway. The polypeptide is Homeobox-leucine zipper protein ATHB-13 (ATHB-13) (Arabidopsis thaliana (Mouse-ear cress)).